The following is a 1405-amino-acid chain: MKDLLNLFNQQRQTLDFDAIKIALASPDLIRSWSYGEVKKPETINYRTFKPERDGLFCAAIFGPIKDYECLCGKYKRMKHRGVVCEKCGTEVTLAKVRRERMGHIDLASPVAHIWFLKSLPSRIGLMLDMTLRDIERVLYFEAYVVTEPGLTPLERRQLLTEEQYLTARQEYNDDFDAAMGAEAVYELLRTIDLQSEMTRLREEIASTGSETKLKRLTKRIKLIEAFLESGNRPEWMVMTVLPVLPPDLRPLVPLDGGRFATSDLNDLYRRVINRNNRLRRLLELNAPDIIVRNEKRMLQESVDALLDNGRRGRAITGTNKRPLKSLADMIKGKQGRFRQNLLGKRVDYSGRSVITVGPYLKLHQCGLPKKMALELFKPFVFAKLQRRGLATTIKAAKKLVEREEAEVWDILEEVIREHPVLLNRAPTLHRLGIQAFEPVLIEGKAIQLHPLVCTAFNADFDGDQMAVHVPLSLEAQLEARALMMSTNNILSPANGEPIIVPSQDVVLGLYYMSRALENKKGEGMVFANTSEVKRAYDNRVVELHAKVKVRITQVDVDTVDGKRTSGTSIVDTTVGRALLSEILPEGLPFQLANTEMTKKNISRLINSSYRLLGLKDTVVFADKLMYTGYAYATRAGVSIGIDDMLIPDEKKGILTEAEAEVLEIQEQYQSGLVTAGERYNKVVDIWSRTSERIAKAMMDTIGTEKVENAKGETIDQKSMNSLYIMADSGARGSQAQIRQLAGMRGLMARPDGSIIETPIKANFREGLNVQEYFNSTHGARKGLADTALKTANSGYLTRRLVDVAQDVVITEVDCGTTEGLIMTPIVEGGDVVEPLKERVLGRVVAEDVYLPGNDEEPIVTRNTLLDEAWVAKLEDASVQSVKVRSTISCESSFGVCARCYGRDLARGHQVNIGEAVGVIAAQSIGEPGTQLTMRTFHIGGAASRAAAVDNITVKTTGSVKFNNLKSVAHASGALVAVSRSGELSVLDGHGRERERYKLPYGATITAKDGDAVKAGQAVANWDPHNHPIVSEVAGFIRFIDFVDGVTVIEKTDELTGLASREITDPKRRGAQAKELRPIVRIVDAKGNDLTIPNTDLPAQYLLPPRSIVNLQDGAAVGVGDVVAKIPQEASKTRDITGGLPRVADLFEARKPKDPAILAERSGIISFGKDTKGKQRLIIKDTDGSEHEELIPKYRQIIVFEGEHVTKGETVVDGEPSPQDILRLLGVEPLAAYLVKEIQDVYRLQGVKINDKHIEVITRQMLRKVEITDQGNSKFLNGEQVERQRVIEENARLVTRNELPAKYDPVLLGITKASLATESFISAASFQETTRVLTEAAVRGTRDNLRGLKENVIVGRLIPAGTGLAYHAGRRKASGLTDSEMETLSGKPAVVEPVATVADAGADEE.

The Zn(2+) site is built by Cys-70, Cys-72, Cys-85, and Cys-88. The Mg(2+) site is built by Asp-460, Asp-462, and Asp-464. Zn(2+) is bound by residues Cys-815, Cys-890, Cys-897, and Cys-900.

The protein belongs to the RNA polymerase beta' chain family. As to quaternary structure, the RNAP catalytic core consists of 2 alpha, 1 beta, 1 beta' and 1 omega subunit. When a sigma factor is associated with the core the holoenzyme is formed, which can initiate transcription. Mg(2+) is required as a cofactor. Requires Zn(2+) as cofactor.

The catalysed reaction is RNA(n) + a ribonucleoside 5'-triphosphate = RNA(n+1) + diphosphate. DNA-dependent RNA polymerase catalyzes the transcription of DNA into RNA using the four ribonucleoside triphosphates as substrates. The sequence is that of DNA-directed RNA polymerase subunit beta' from Xanthomonas campestris pv. campestris (strain 8004).